The following is a 127-amino-acid chain: Large ribosomal subunit protein bL20 (127 aa).

This sequence belongs to the bacterial ribosomal protein bL20 family.

Binds directly to 23S ribosomal RNA and is necessary for the in vitro assembly process of the 50S ribosomal subunit. It is not involved in the protein synthesizing functions of that subunit. The protein is Large ribosomal subunit protein bL20 of Streptomyces avermitilis (strain ATCC 31267 / DSM 46492 / JCM 5070 / NBRC 14893 / NCIMB 12804 / NRRL 8165 / MA-4680).